A 123-amino-acid chain; its full sequence is Altered inheritance of mitochondria protein 4 (123 aa).

Over residues 1–16 (MDQKKDPSNNLTERRV) the composition is skewed to basic and acidic residues. Residues 1–42 (MDQKKDPSNNLTERRVSKVQRPNKKKVRNQVESLSRNLERNK) form a disordered region. A compositionally biased stretch (basic residues) spans 17–28 (SKVQRPNKKKVR).

Belongs to the AIM4 family. As to quaternary structure, may interact with the nuclear pore complex.

It localises to the cytoplasm. This Saccharomyces cerevisiae (strain ATCC 204508 / S288c) (Baker's yeast) protein is Altered inheritance of mitochondria protein 4 (AIM4).